The sequence spans 272 residues: uncharacterized protein (272 aa).

The disordered stretch occupies residues 193-250 (AFLLPNNSKGVEKSEENEDGVTDNDSSNVNSSTNESPNPTDINVCSNDDATDNTENNL). Residues 215–233 (DNDSSNVNSSTNESPNPTD) show a composition bias toward low complexity. Over residues 235 to 248 (NVCSNDDATDNTEN) the composition is skewed to polar residues.

This sequence belongs to the pal1 family.

It localises to the cytoplasm. The protein resides in the nucleus. This is an uncharacterized protein from Schizosaccharomyces pombe (strain 972 / ATCC 24843) (Fission yeast).